We begin with the raw amino-acid sequence, 325 residues long: MVAELEFEKPLVELRRKIQELKEFMKTADVDLSAEIEKLEARLAKLENEIYANLTPWDRVQIARHPQRPTTLDYIERLFTNFLECHGDRCFGDDEAIVGGIAKYDGLPVTVIGHQRGKDTKENLRRNFGMPHPEGYRKALRLMKQAEKFSRPIICFIDTKGAYPGKAAEERGQSEAIARNLFEMAGLTVPVVCIVIGEGGSGGALALGVGNHIHMLENSTYSVISPEGAAAILWKDASLAQRAAETMKITAHDLKALGVIDEIIPEVKGGAHRNADEQAKEIDRVLRRSLKQLLALDGEELVRQRYEKFKQMGQVSFLPETIRAR.

One can recognise a CoA carboxyltransferase C-terminal domain in the interval 35–292; the sequence is EIEKLEARLA…DRVLRRSLKQ (258 aa).

Belongs to the AccA family. As to quaternary structure, acetyl-CoA carboxylase is a heterohexamer composed of biotin carboxyl carrier protein (AccB), biotin carboxylase (AccC) and two subunits each of ACCase subunit alpha (AccA) and ACCase subunit beta (AccD).

It is found in the cytoplasm. It carries out the reaction N(6)-carboxybiotinyl-L-lysyl-[protein] + acetyl-CoA = N(6)-biotinyl-L-lysyl-[protein] + malonyl-CoA. It participates in lipid metabolism; malonyl-CoA biosynthesis; malonyl-CoA from acetyl-CoA: step 1/1. In terms of biological role, component of the acetyl coenzyme A carboxylase (ACC) complex. First, biotin carboxylase catalyzes the carboxylation of biotin on its carrier protein (BCCP) and then the CO(2) group is transferred by the carboxyltransferase to acetyl-CoA to form malonyl-CoA. In Geobacillus kaustophilus (strain HTA426), this protein is Acetyl-coenzyme A carboxylase carboxyl transferase subunit alpha.